The chain runs to 232 residues: 5'-methylthioadenosine/S-adenosylhomocysteine nucleosidase (232 aa).

The active-site Proton acceptor is the Glu-12. Residues Gly-78, Ile-152, and 173-174 (ME) contribute to the substrate site. Asp-197 acts as the Proton donor in catalysis.

This sequence belongs to the PNP/UDP phosphorylase family. MtnN subfamily. In terms of assembly, homodimer.

It carries out the reaction S-adenosyl-L-homocysteine + H2O = S-(5-deoxy-D-ribos-5-yl)-L-homocysteine + adenine. The enzyme catalyses S-methyl-5'-thioadenosine + H2O = 5-(methylsulfanyl)-D-ribose + adenine. The catalysed reaction is 5'-deoxyadenosine + H2O = 5-deoxy-D-ribose + adenine. It participates in amino-acid biosynthesis; L-methionine biosynthesis via salvage pathway; S-methyl-5-thio-alpha-D-ribose 1-phosphate from S-methyl-5'-thioadenosine (hydrolase route): step 1/2. Its function is as follows. Catalyzes the irreversible cleavage of the glycosidic bond in both 5'-methylthioadenosine (MTA) and S-adenosylhomocysteine (SAH/AdoHcy) to adenine and the corresponding thioribose, 5'-methylthioribose and S-ribosylhomocysteine, respectively. Also cleaves 5'-deoxyadenosine, a toxic by-product of radical S-adenosylmethionine (SAM) enzymes, into 5-deoxyribose and adenine. Thus, is required for in vivo function of the radical SAM enzymes biotin synthase and lipoic acid synthase, that are inhibited by 5'-deoxyadenosine accumulation. This Salmonella enteritidis PT4 (strain P125109) protein is 5'-methylthioadenosine/S-adenosylhomocysteine nucleosidase.